Here is a 169-residue protein sequence, read N- to C-terminus: Large ribosomal subunit protein uL23 (169 aa).

Residues 1 to 20 (MAGKKVKSNTPKQDLSVSKS) are disordered. The segment covering 8 to 20 (SNTPKQDLSVSKS) has biased composition (polar residues).

This sequence belongs to the universal ribosomal protein uL23 family.

Functionally, this protein binds to a specific region on the 26S rRNA. The chain is Large ribosomal subunit protein uL23 (rpl23a) from Dictyostelium discoideum (Social amoeba).